We begin with the raw amino-acid sequence, 374 residues long: Peptidoglycan recognition protein 4 (374 aa).

An N-terminal signal peptide occupies residues 1–20 (MLSWLLVFSILVLLAQGVSS). Residues asparagine 39, asparagine 93, and asparagine 146 are each glycosylated (N-linked (GlcNAc...) asparagine). 2 N-acetylmuramoyl-L-alanine amidase domains span residues 76–212 (RPVD…KACP) and 233–359 (PAKY…LSPG). Cystine bridges form between cysteine 211–cysteine 333, cysteine 227–cysteine 271, and cysteine 247–cysteine 253. Peptidoglycan is bound at residue tyrosine 275. Interaction with murein stretches follow at residues 294–303 (QGSKTDSYND) and 354–355 (NT).

It belongs to the N-acetylmuramoyl-L-alanine amidase 2 family. In terms of assembly, homodimer; disulfide-linked. Heterodimer with PGLYRP3; disulfide-linked. In terms of tissue distribution, ubiquitous.

Its subcellular location is the secreted. Functionally, pattern receptor that binds to murein peptidoglycans (PGN) of Gram-positive bacteria. Has bactericidal activity towards Gram-positive bacteria. May kill Gram-positive bacteria by interfering with peptidoglycan biosynthesis. Also binds to Gram-negative bacteria, and has bacteriostatic activity towards Gram-negative bacteria. Plays a role in innate immunity. The sequence is that of Peptidoglycan recognition protein 4 (Pglyrp4) from Mus musculus (Mouse).